The chain runs to 2203 residues: Genome polyprotein (2203 aa).

Gly2 carries the N-myristoyl glycine; by host lipid modification. Over 2–1513 (GAQVSTQKTG…HVSRAFICLQ (1512 aa)) the chain is Cytoplasmic. The segment at 567-583 (ELQNDVRQAVEGAIGRV) is amphipathic alpha-helix. Catalysis depends on for protease 2A activity residues His890 and Asp908. Positions 925 and 927 each coordinate Zn(2+). Catalysis depends on Cys979, which acts as the For protease 2A activity. Cys985 and His987 together coordinate Zn(2+). Residues 1119–1191 (SNGWLKKFTE…EQSAPSQSDQ (73 aa)) are membrane-binding. Positions 1119-1257 (SNGWLKKFTE…SPGAGKSVAT (139 aa)) are oligomerization. An RNA-binding region spans residues 1140-1144 (AVKIQ). One can recognise an SF3 helicase domain in the interval 1223-1379 (EKKMSNYIQF…SMYSQNGKIN (157 aa)). Zn(2+) contacts are provided by Cys1387, Cys1399, and Cys1404. The C4-type; degenerate zinc finger occupies 1387-1404 (CDEECCPVNFKRCCPLVC). Positions 1431–1438 (EYNHRHSV) are RNA-binding. Positions 1442–1447 (LEALFQ) are oligomerization. The stretch at 1514–1529 (ALTTFVSVAGIIYIIY) is an intramembrane region. The Cytoplasmic portion of the chain corresponds to 1530 to 2203 (KLFAGFQGAY…TLRRKWLDSF (674 aa)). Position 1539 is an O-(5'-phospho-RNA)-tyrosine (Tyr1539). Residues 1559–1737 (GPAFEFAVAM…FSAALLRHYF (179 aa)) enclose the Peptidase C3 domain. Active-site for protease 3C activity residues include His1598, Glu1629, and Cys1705. The 117-residue stretch at 1968–2084 (GHLIAFDYSG…SYPWPIDASL (117 aa)) folds into the RdRp catalytic domain. Mg(2+) is bound by residues Asp1974 and Asp2070.

The protein belongs to the picornaviruses polyprotein family. In terms of assembly, interacts with capsid protein VP1 and capsid protein VP3 to form heterotrimeric protomers. As to quaternary structure, interacts with capsid protein VP0, and capsid protein VP3 to form heterotrimeric protomers. Five protomers subsequently associate to form pentamers which serve as building blocks for the capsid. Interacts with capsid protein VP2, capsid protein VP3 and capsid protein VP4 following cleavage of capsid protein VP0. Interacts with capsid protein VP1 and capsid protein VP3 in the mature capsid. In terms of assembly, interacts with capsid protein VP0 and capsid protein VP1 to form heterotrimeric protomers. Five protomers subsequently associate to form pentamers which serve as building blocks for the capsid. Interacts with capsid protein VP4 in the mature capsid. Interacts with protein 2C; this interaction may be important for virion morphogenesis. As to quaternary structure, interacts with capsid protein VP1 and capsid protein VP3. Homodimer. In terms of assembly, homohexamer; forms a hexameric ring structure with 6-fold symmetry characteristic of AAA+ ATPases. Interacts (via N-terminus) with host RTN3 (via reticulon domain); this interaction is important for viral replication. Interacts with capsid protein VP3; this interaction may be important for virion morphogenesis. As to quaternary structure, interacts with protein 3CD. Homodimer. Interacts with host GBF1. Interacts (via GOLD domain) with host ACBD3 (via GOLD domain); this interaction allows the formation of a viral protein 3A/ACBD3 heterotetramer with a 2:2 stoichiometry, which will stimulate the recruitment of host PI4KB in order to synthesize PI4P at the viral RNA replication sites. In terms of assembly, interacts with RNA-directed RNA polymerase. As to quaternary structure, interacts with protein 3AB and with RNA-directed RNA polymerase. Interacts with Viral protein genome-linked and with protein 3CD. Mg(2+) is required as a cofactor. Post-translationally, specific enzymatic cleavages in vivo by the viral proteases yield processing intermediates and the mature proteins. In terms of processing, myristoylation is required for the formation of pentamers during virus assembly. Further assembly of 12 pentamers and a molecule of genomic RNA generates the provirion. During virion maturation, immature virions are rendered infectious following cleavage of VP0 into VP4 and VP2. This maturation seems to be an autocatalytic event triggered by the presence of RNA in the capsid and it is followed by a conformational change infectious virion. Post-translationally, myristoylation is required during RNA encapsidation and formation of the mature virus particle. In terms of processing, VPg is uridylylated by the polymerase into VPg-pUpU. This acts as a nucleotide-peptide primer for the genomic RNA replication.

Its subcellular location is the virion. The protein localises to the host cytoplasm. It localises to the host cytoplasmic vesicle membrane. The protein resides in the host nucleus. The catalysed reaction is a ribonucleoside 5'-triphosphate + H2O = a ribonucleoside 5'-diphosphate + phosphate + H(+). It carries out the reaction Selective cleavage of Tyr-|-Gly bond in the picornavirus polyprotein.. The enzyme catalyses RNA(n) + a ribonucleoside 5'-triphosphate = RNA(n+1) + diphosphate. It catalyses the reaction Selective cleavage of Gln-|-Gly bond in the poliovirus polyprotein. In other picornavirus reactions Glu may be substituted for Gln, and Ser or Thr for Gly.. With respect to regulation, replication or transcription is subject to high level of random mutations by the nucleotide analog ribavirin. Its function is as follows. Forms an icosahedral capsid of pseudo T=3 symmetry with capsid proteins VP2 and VP3. The capsid is 300 Angstroms in diameter, composed of 60 copies of each capsid protein and enclosing the viral positive strand RNA genome. Capsid protein VP1 mainly forms the vertices of the capsid. Capsid protein VP1 interacts with host cell receptor to provide virion attachment to target host cells. This attachment induces virion internalization. Tyrosine kinases are probably involved in the entry process. After binding to its receptor, the capsid undergoes conformational changes. Capsid protein VP1 N-terminus (that contains an amphipathic alpha-helix) and capsid protein VP4 are externalized. Together, they shape a pore in the host membrane through which viral genome is translocated to host cell cytoplasm. Functionally, forms an icosahedral capsid of pseudo T=3 symmetry with capsid proteins VP2 and VP3. The capsid is 300 Angstroms in diameter, composed of 60 copies of each capsid protein and enclosing the viral positive strand RNA genome. In terms of biological role, lies on the inner surface of the capsid shell. After binding to the host receptor, the capsid undergoes conformational changes. Capsid protein VP4 is released, Capsid protein VP1 N-terminus is externalized, and together, they shape a pore in the host membrane through which the viral genome is translocated into the host cell cytoplasm. Component of immature procapsids, which is cleaved into capsid proteins VP4 and VP2 after maturation. Allows the capsid to remain inactive before the maturation step. Its function is as follows. Cysteine protease that cleaves viral polyprotein and specific host proteins. It is responsible for the autocatalytic cleavage between the P1 and P2 regions, which is the first cleavage occurring in the polyprotein. Also cleaves the host translation initiation factor EIF4G1, in order to shut down the capped cellular mRNA translation. Inhibits the host nucleus-cytoplasm protein and RNA trafficking by cleaving host members of the nuclear pores. Counteracts stress granule formation probably by antagonizing its assembly or promoting its dissassembly. Functionally, plays an essential role in the virus replication cycle by acting as a viroporin. Creates a pore in the host endoplasmic reticulum and as a consequence releases Ca2+ in the cytoplasm of infected cell. In turn, high levels of cytoplasmic calcium may trigger membrane trafficking and transport of viral ER-associated proteins to viroplasms, sites of viral genome replication. In terms of biological role, induces and associates with structural rearrangements of intracellular membranes. Displays RNA-binding, nucleotide binding and NTPase activities. May play a role in virion morphogenesis and viral RNA encapsidation by interacting with the capsid protein VP3. Localizes the viral replication complex to the surface of membranous vesicles. Together with protein 3CD binds the Cis-Active RNA Element (CRE) which is involved in RNA synthesis initiation. Acts as a cofactor to stimulate the activity of 3D polymerase, maybe through a nucleid acid chaperone activity. Its function is as follows. Localizes the viral replication complex to the surface of membranous vesicles. It inhibits host cell endoplasmic reticulum-to-Golgi apparatus transport and causes the disassembly of the Golgi complex, possibly through GBF1 interaction. This would result in depletion of MHC, trail receptors and IFN receptors at the host cell surface. Plays an essential role in viral RNA replication by recruiting ACBD3 and PI4KB at the viral replication sites, thereby allowing the formation of the rearranged membranous structures where viral replication takes place. Functionally, acts as a primer for viral RNA replication and remains covalently bound to viral genomic RNA. VPg is uridylylated prior to priming replication into VPg-pUpU. The oriI viral genomic sequence may act as a template for this. The VPg-pUpU is then used as primer on the genomic RNA poly(A) by the RNA-dependent RNA polymerase to replicate the viral genome. During genome replication, the VPg-RNA linkage is removed by the host TDP2, thereby accelerating replication. During the late stage of the replication cycle, host TDP2 is excluded from sites of viral RNA synthesis and encapsidation, allowing for the generation of progeny virions. In terms of biological role, involved in the viral replication complex and viral polypeptide maturation. It exhibits protease activity with a specificity and catalytic efficiency that is different from protease 3C. Protein 3CD lacks polymerase activity. Protein 3CD binds to the 5'UTR of the viral genome. Replicates the viral genomic RNA on the surface of intracellular membranes. May form linear arrays of subunits that propagate along a strong head-to-tail interaction called interface-I. Covalently attaches UMP to a tyrosine of VPg, which is used to prime RNA synthesis. The positive stranded RNA genome is first replicated at virus induced membranous vesicles, creating a dsRNA genomic replication form. This dsRNA is then used as template to synthesize positive stranded RNA genomes. ss(+)RNA genomes are either translated, replicated or encapsidated. Its function is as follows. Major viral protease that mediates proteolytic processing of the polyprotein. Cleaves host EIF5B, contributing to host translation shutoff. Also cleaves host PABPC1, contributing to host translation shutoff. Cleaves host NLRP1, triggers host N-glycine-mediated degradation of the autoinhibitory NLRP1 N-terminal fragment. The polypeptide is Genome polyprotein (Echovirus 9 (strain Barty)).